The primary structure comprises 31 residues: Cliotide T17 (31 aa).

Positions 1–31 form a cross-link, cyclopeptide (Gly-Asn); the sequence is GTVPCGESCVFIPCITGIAGCSCKNKVCYLN. Intrachain disulfides connect cysteine 5–cysteine 21, cysteine 9–cysteine 23, and cysteine 14–cysteine 28.

Post-translationally, contains 3 disulfide bonds. This is a cyclic peptide. Expressed in root nodules but not in seed.

Its function is as follows. Probably participates in a plant defense mechanism. This chain is Cliotide T17, found in Clitoria ternatea (Butterfly pea).